The primary structure comprises 198 residues: MVGQPQPRDDVGSPRPRVIVGTIRPRVIVGTIRPRVIVGSARARPPPDGTPRPQLAAEESPRPRVIFGTPRARVILGSPRPRVIVSSPWPAVVVASPRPRTPVGSPWPRVVVGTPRPRVIVGSPRARVADADPASAPSQGALQGRRQDEHSGTRAEGSRPGGAAPVPEEGGRFARAQRLPPPRHLRLPGAPDRHRGQI.

A run of 13 repeats spans residues 7-15, 16-24, 25-33, 34-42, 43-51, 52-60, 61-69, 70-78, 79-87, 88-96, 97-105, 106-114, and 115-123. The interval 7–125 is 13 x 9 AA approximate tandem-repeats of P-R-V-I-V-G-(S/T)-P-R; sequence PRDDVGSPRP…RPRVIVGSPR (119 aa). Phosphoserine is present on S13. A disordered region spans residues 37 to 64; the sequence is IVGSARARPPPDGTPRPQLAAEESPRPR. T69 is subject to Phosphothreonine. 3 positions are modified to phosphoserine: S78, S87, and S96. Low complexity predominate over residues 94–121; the sequence is VASPRPRTPVGSPWPRVVVGTPRPRVIV. The disordered stretch occupies residues 94–198; that stretch reads VASPRPRTPV…GAPDRHRGQI (105 aa). The residue at position 123 (S123) is a Phosphoserine. Basic and acidic residues predominate over residues 145-157; sequence RRQDEHSGTRAEG. Positions 161-178 are enriched in low complexity; that stretch reads GGAAPVPEEGGRFARAQR.

As to quaternary structure, may interact with EIF5A and ERF1. In terms of processing, phosphorylated during M-phase.

It is found in the nucleus. The protein localises to the nucleolus. This chain is Ras-related protein Rab-34, isoform NARR (RAB34), found in Homo sapiens (Human).